A 183-amino-acid polypeptide reads, in one-letter code: NAD(P)H-quinone oxidoreductase subunit I, chloroplastic (183 aa).

4Fe-4S ferredoxin-type domains follow at residues 55 to 84 (GRIH…VDWK) and 95 to 124 (KSYS…MTEE). The [4Fe-4S] cluster site is built by Cys64, Cys67, Cys70, Cys74, Cys104, Cys107, Cys110, and Cys114.

Belongs to the complex I 23 kDa subunit family. As to quaternary structure, NDH is composed of at least 16 different subunits, 5 of which are encoded in the nucleus. Requires [4Fe-4S] cluster as cofactor.

The protein resides in the plastid. Its subcellular location is the chloroplast thylakoid membrane. It catalyses the reaction a plastoquinone + NADH + (n+1) H(+)(in) = a plastoquinol + NAD(+) + n H(+)(out). The catalysed reaction is a plastoquinone + NADPH + (n+1) H(+)(in) = a plastoquinol + NADP(+) + n H(+)(out). Its function is as follows. NDH shuttles electrons from NAD(P)H:plastoquinone, via FMN and iron-sulfur (Fe-S) centers, to quinones in the photosynthetic chain and possibly in a chloroplast respiratory chain. The immediate electron acceptor for the enzyme in this species is believed to be plastoquinone. Couples the redox reaction to proton translocation, and thus conserves the redox energy in a proton gradient. The chain is NAD(P)H-quinone oxidoreductase subunit I, chloroplastic from Anthoceros angustus (Hornwort).